The following is a 221-amino-acid chain: Ktr system potassium uptake protein C (221 aa).

Positions 2–118 (KKEFAVIGLG…LSKIGADHIV (117 aa)) constitute an RCK N-terminal domain. NAD(+) is bound by residues arginine 12, 32–34 (DID), 52–53 (DS), 74–76 (IGE), 99–101 (KAQ), histidine 105, and glutamate 121. Positions 135 to 219 (NNVLDYLELS…ISRFEKRVLH (85 aa)) constitute an RCK C-terminal domain.

The protein belongs to the KtrA potassium transport family. As to quaternary structure, homodimer, tetramer (dimer of homodimer) and octamer (tetramer of homodimer). Part of the KtrCD complex formed by an octameric catalytic ring of KtrC and a membrane associated dimer of KtrD forming a potassium channel.

The protein resides in the cell membrane. Functionally, catalytic subunit of the KtrCD potassium uptake transporter. The 2 major potassium transporter complexes KtrAB and KtrCD confer resistance to both suddenly imposed and prolonged osmotic stress. The chain is Ktr system potassium uptake protein C (ktrC) from Bacillus subtilis (strain 168).